The following is a 359-amino-acid chain: Methionine import ATP-binding protein MetN (359 aa).

Positions 1-21 (MSTPASTPAPDGSHQRDHHPG) are disordered. One can recognise an ABC transporter domain in the interval 24–264 (VEFRGVTKVF…PQTTVAQRFV (241 aa)). Position 61 to 68 (61 to 68 (GYSGAGKS)) interacts with ATP.

The protein belongs to the ABC transporter superfamily. Methionine importer (TC 3.A.1.24) family. In terms of assembly, the complex is composed of two ATP-binding proteins (MetN), two transmembrane proteins (MetI) and a solute-binding protein (MetQ).

It localises to the cell membrane. The catalysed reaction is L-methionine(out) + ATP + H2O = L-methionine(in) + ADP + phosphate + H(+). The enzyme catalyses D-methionine(out) + ATP + H2O = D-methionine(in) + ADP + phosphate + H(+). Functionally, part of the ABC transporter complex MetNIQ involved in methionine import. Responsible for energy coupling to the transport system. This Corynebacterium efficiens (strain DSM 44549 / YS-314 / AJ 12310 / JCM 11189 / NBRC 100395) protein is Methionine import ATP-binding protein MetN.